We begin with the raw amino-acid sequence, 318 residues long: Ribonuclease Z (318 aa).

Zn(2+) contacts are provided by histidine 63, histidine 65, aspartate 67, histidine 68, histidine 142, aspartate 210, and histidine 268. Catalysis depends on aspartate 67, which acts as the Proton acceptor.

The protein belongs to the RNase Z family. Homodimer. Zn(2+) is required as a cofactor.

It carries out the reaction Endonucleolytic cleavage of RNA, removing extra 3' nucleotides from tRNA precursor, generating 3' termini of tRNAs. A 3'-hydroxy group is left at the tRNA terminus and a 5'-phosphoryl group is left at the trailer molecule.. Functionally, zinc phosphodiesterase, which displays some tRNA 3'-processing endonuclease activity. Probably involved in tRNA maturation, by removing a 3'-trailer from precursor tRNA. In Thermobifida fusca (strain YX), this protein is Ribonuclease Z.